Reading from the N-terminus, the 601-residue chain is Kelch-like ECH-associated protein 1A (601 aa).

Residues 44–117 (MDELRHHEML…VISRLIDFAY (74 aa)) enclose the BTB domain. The region spanning 153 to 253 (KNLEPSNVIG…LNAVHIYALP (101 aa)) is the BACK domain. 6 Kelch repeats span residues 292-337 (PTPH…PCSG), 338-388 (LGAC…PRNR), 389-435 (VGVG…ARLG), 436-482 (AGVA…VRSG), 484-529 (GVVC…CRSA), and 530-576 (HGVS…GRSG).

The protein belongs to the KEAP1 family. Homodimer and heterodimer; heterodimerizes with keap1b. Component of the BCR(KEAP1) E3 ubiquitin ligase complex, at least composed of 2 molecules of cul3, 2 molecules of keap1 (keap1a and/or keap1b), and rbx1. Interacts with nfe2l2/nrf2; the interaction is direct. In terms of processing, non-enzymatic covalent modifications of reactive cysteines by electrophile metabolites inactivate the BCR(KEAP1) complex. Widely expressed.

The protein localises to the cytoplasm. The protein resides in the nucleus. It participates in protein modification; protein ubiquitination. Its activity is regulated as follows. Ubiquitin ligase activity of the BCR(KEAP1) complex is inhibited by oxidative stress and electrophile metabolites such as sulforaphane. Electrophile metabolites react with reactive cysteine residues in keap1 and trigger non-enzymatic covalent modifications of these cysteine residues, leading to inactivate the ubiquitin ligase activity of the BCR(KEAP1) complex. In terms of biological role, substrate-specific adapter of a BCR (BTB-CUL3-RBX1) E3 ubiquitin ligase complex that regulates the response to oxidative stress by targeting nfe2l2/nrf2 for ubiquitination. Keap1 acts as a key sensor of oxidative and electrophilic stress: in normal conditions, the BCR(KEAP1) complex mediates ubiquitination and degradation of nfe2l2/nrf2, a transcription factor regulating expression of many cytoprotective genes. In response to oxidative stress, different electrophile metabolites trigger non-enzymatic covalent modifications of highly reactive cysteine residues in KEAP1, leading to inactivate the ubiquitin ligase activity of the BCR(KEAP1) complex, promoting nfe2l2/nrf2 nuclear accumulation and expression of phase II detoxifying enzymes. The chain is Kelch-like ECH-associated protein 1A from Danio rerio (Zebrafish).